The primary structure comprises 778 residues: Endonuclease MutS2 (778 aa).

328 to 335 provides a ligand contact to ATP; the sequence is GPNTGGKT. The 76-residue stretch at 702 to 777 folds into the Smr domain; it reads LDLRGKRYEE…GSGATIVTFK (76 aa).

Belongs to the DNA mismatch repair MutS family. MutS2 subfamily. Homodimer. Binds to stalled ribosomes, contacting rRNA.

In terms of biological role, endonuclease that is involved in the suppression of homologous recombination and thus may have a key role in the control of bacterial genetic diversity. Functionally, acts as a ribosome collision sensor, splitting the ribosome into its 2 subunits. Detects stalled/collided 70S ribosomes which it binds and splits by an ATP-hydrolysis driven conformational change. Acts upstream of the ribosome quality control system (RQC), a ribosome-associated complex that mediates the extraction of incompletely synthesized nascent chains from stalled ribosomes and their subsequent degradation. Probably generates substrates for RQC. The polypeptide is Endonuclease MutS2 (Streptococcus pneumoniae (strain Hungary19A-6)).